Reading from the N-terminus, the 348-residue chain is Dihydroorotase (348 aa).

The Zn(2+) site is built by His14 and His16. Residues His16 to Arg18 and Asn42 each bind substrate. Residues Lys100, His137, and His175 each contribute to the Zn(2+) site. At Lys100 the chain carries N6-carboxylysine. His137 is a binding site for substrate. Leu220 contacts substrate. Asp248 contributes to the Zn(2+) binding site. Residue Asp248 is part of the active site. 2 residues coordinate substrate: His252 and Ala264.

It belongs to the metallo-dependent hydrolases superfamily. DHOase family. Class II DHOase subfamily. Homodimer. Zn(2+) serves as cofactor.

It carries out the reaction (S)-dihydroorotate + H2O = N-carbamoyl-L-aspartate + H(+). It functions in the pathway pyrimidine metabolism; UMP biosynthesis via de novo pathway; (S)-dihydroorotate from bicarbonate: step 3/3. Catalyzes the reversible cyclization of carbamoyl aspartate to dihydroorotate. The protein is Dihydroorotase of Pseudomonas paraeruginosa (strain DSM 24068 / PA7) (Pseudomonas aeruginosa (strain PA7)).